The chain runs to 264 residues: Thymidylate synthase (264 aa).

Residue Arg-21 coordinates dUMP. His-51 contacts (6R)-5,10-methylene-5,6,7,8-tetrahydrofolate. 126 to 127 (RR) provides a ligand contact to dUMP. Catalysis depends on Cys-146, which acts as the Nucleophile. DUMP contacts are provided by residues 166–169 (RSCD), Asn-177, and 207–209 (HLY). (6R)-5,10-methylene-5,6,7,8-tetrahydrofolate is bound at residue Asp-169. A (6R)-5,10-methylene-5,6,7,8-tetrahydrofolate-binding site is contributed by Ala-263.

Belongs to the thymidylate synthase family. Bacterial-type ThyA subfamily. In terms of assembly, homodimer.

It is found in the cytoplasm. It carries out the reaction dUMP + (6R)-5,10-methylene-5,6,7,8-tetrahydrofolate = 7,8-dihydrofolate + dTMP. The protein operates within pyrimidine metabolism; dTTP biosynthesis. Functionally, catalyzes the reductive methylation of 2'-deoxyuridine-5'-monophosphate (dUMP) to 2'-deoxythymidine-5'-monophosphate (dTMP) while utilizing 5,10-methylenetetrahydrofolate (mTHF) as the methyl donor and reductant in the reaction, yielding dihydrofolate (DHF) as a by-product. This enzymatic reaction provides an intracellular de novo source of dTMP, an essential precursor for DNA biosynthesis. The protein is Thymidylate synthase of Shewanella baltica (strain OS223).